The sequence spans 489 residues: WRKY transcription factor 72B (489 aa).

Disordered stretches follow at residues 1–100 (MENK…EMRE), 131–159 (QKET…QEAD), and 234–267 (DENE…RARV). Basic and acidic residues-rich tracts occupy residues 32-52 (GRKE…KDYM) and 83-100 (THKE…EMRE). Positions 84-132 (HKEQDDQLASAKDEMREVMEENQRLRMHLDRMMKEYRNLQNQFHDIVQK) form a coiled coil. A compositionally biased stretch (low complexity) spans 138–147 (SSSTTVNTST). The segment at residues 273–339 (CDAPTMNDGC…YEGTHNHTLP (67 aa)) is a DNA-binding region (WRKY). 2 disordered regions span residues 356–381 (LLSG…PTTT) and 427–454 (TSTS…YNYN). Composition is skewed to low complexity over residues 371 to 381 (TATTTTTPTTT) and 427 to 438 (TSTSSSSPSSLS).

This sequence belongs to the WRKY group II-b family.

It localises to the nucleus. In association with WRKY72A, contributes to basal defense against root-knot nematodes (RKNs) and potato aphids, as well as Mi-1-mediated gene-for-gene resistance to these pests. Both WRKY72A and WRKY72B are not required for gene-for-gene resistance mediated by Pto, another tomato R gene. The sequence is that of WRKY transcription factor 72B from Solanum lycopersicum (Tomato).